The following is an 816-amino-acid chain: uncharacterized protein (816 aa).

Residue Asp-503–Leu-534 coordinates NADP(+). Residue Ser-641 participates in substrate binding. Tyr-661 acts as the Proton acceptor in catalysis. Helical transmembrane passes span Phe-743 to Leu-763 and Val-777 to Asn-797.

This sequence belongs to the short-chain dehydrogenases/reductases (SDR) family.

The protein localises to the membrane. This is an uncharacterized protein from Caenorhabditis elegans.